We begin with the raw amino-acid sequence, 303 residues long: Foldase protein PrsA (303 aa).

An N-terminal signal peptide occupies residues 1-20 (MMKKWLLAAASLLMVVTLAG). Cysteine 21 is lipidated: N-palmitoyl cysteine. Cysteine 21 carries S-diacylglycerol cysteine lipidation. The 97-residue stretch at 137 to 233 (EPKVEVQHIL…YGYHVIRMIK (97 aa)) folds into the PpiC domain.

It belongs to the PrsA family.

The protein resides in the cell membrane. It carries out the reaction [protein]-peptidylproline (omega=180) = [protein]-peptidylproline (omega=0). In terms of biological role, plays a major role in protein secretion by helping the post-translocational extracellular folding of several secreted proteins. In Latilactobacillus sakei subsp. sakei (strain 23K) (Lactobacillus sakei subsp. sakei), this protein is Foldase protein PrsA.